A 126-amino-acid chain; its full sequence is Small ribosomal subunit protein uS12 (126 aa).

The segment at 1 to 23 (MPTISQLVRKGRKTVASKSTAPA) is disordered. At D89 the chain carries 3-methylthioaspartic acid.

It belongs to the universal ribosomal protein uS12 family. In terms of assembly, part of the 30S ribosomal subunit. Contacts proteins S8 and S17. May interact with IF1 in the 30S initiation complex.

Its function is as follows. With S4 and S5 plays an important role in translational accuracy. Interacts with and stabilizes bases of the 16S rRNA that are involved in tRNA selection in the A site and with the mRNA backbone. Located at the interface of the 30S and 50S subunits, it traverses the body of the 30S subunit contacting proteins on the other side and probably holding the rRNA structure together. The combined cluster of proteins S8, S12 and S17 appears to hold together the shoulder and platform of the 30S subunit. This Clostridium perfringens (strain ATCC 13124 / DSM 756 / JCM 1290 / NCIMB 6125 / NCTC 8237 / Type A) protein is Small ribosomal subunit protein uS12.